Here is an 86-residue protein sequence, read N- to C-terminus: Exopolysaccharide production repressor protein (86 aa).

Residues 18–38 form a helical membrane-spanning segment; that stretch reads FAVTLAASVFLQVVYFLSLLF. A disordered region spans residues 44-86; that stretch reads TRESDRSIHSGTRQADQPQKRDRDKTEQSNVPKLDPRRKRRTP. Residues 61–70 show a composition bias toward basic and acidic residues; that stretch reads PQKRDRDKTE.

Its subcellular location is the cell membrane. It participates in glycan metabolism; exopolysaccharide biosynthesis. Inhibition of exopolysaccharide synthesis (EPS) and nodulation ability (NOD). The sequence is that of Exopolysaccharide production repressor protein (exoX) from Rhizobium leguminosarum bv. phaseoli.